A 749-amino-acid polypeptide reads, in one-letter code: Putative Xaa-Pro aminopeptidase FRA1 (749 aa).

The disordered stretch occupies residues 1-33; that stretch reads MTSKPSTSDGRAHSISHVPGTHMRGTSASHSPR. Ser69, Ser92, and Ser95 each carry phosphoserine. Asp551, Asp562, Glu660, and Glu674 together coordinate Mn(2+).

Belongs to the peptidase M24B family. Homodimer. Interacts with FRA2. Requires Mn(2+) as cofactor.

Its subcellular location is the cytoplasm. It carries out the reaction Release of any N-terminal amino acid, including proline, that is linked to proline, even from a dipeptide or tripeptide.. Its function is as follows. Involved in the regulation of the iron regulon in responss to decreased mitochondrial iron-sulfur cluster synthesis. This Saccharomyces cerevisiae (strain ATCC 204508 / S288c) (Baker's yeast) protein is Putative Xaa-Pro aminopeptidase FRA1 (FRA1).